Reading from the N-terminus, the 63-residue chain is Large ribosomal subunit protein uL30 (63 aa).

Belongs to the universal ribosomal protein uL30 family. As to quaternary structure, part of the 50S ribosomal subunit.

This is Large ribosomal subunit protein uL30 from Rickettsia canadensis (strain McKiel).